The sequence spans 99 residues: Plastocyanin (99 aa).

A Plastocyanin-like domain is found at 1–99 (LDVLLGSDDG…AGMVGKVTVN (99 aa)). Cu cation contacts are provided by His-37, Cys-84, His-87, and Met-92.

This sequence belongs to the plastocyanin family. The cofactor is Cu(2+).

It is found in the plastid. The protein localises to the chloroplast thylakoid membrane. In terms of biological role, participates in electron transfer between P700 and the cytochrome b6-f complex in photosystem I. The polypeptide is Plastocyanin (PETE) (Mercurialis perennis (Dog's mercury)).